A 415-amino-acid polypeptide reads, in one-letter code: F-box/kelch-repeat protein At2g29600 (415 aa).

Residues methionine 1–proline 58 form a disordered region. Residues glutamine 19–aspartate 45 show a composition bias toward basic and acidic residues. Residues glutamine 56–leucine 103 enclose the F-box domain. Kelch repeat units lie at residues lysine 161–glycine 208, isoleucine 210–histidine 254, lysine 260–proline 309, and histidine 311–isoleucine 355.

The polypeptide is F-box/kelch-repeat protein At2g29600 (Arabidopsis thaliana (Mouse-ear cress)).